Here is a 596-residue protein sequence, read N- to C-terminus: Aspartate--tRNA(Asp/Asn) ligase (596 aa).

L-aspartate is bound at residue E175. The segment at 199–202 (QQYK) is aspartate. R221 and H454 together coordinate L-aspartate. 221-223 (RDE) contributes to the ATP binding site. Residue E488 coordinates ATP. R495 provides a ligand contact to L-aspartate. 540 to 543 (GIDR) serves as a coordination point for ATP.

Belongs to the class-II aminoacyl-tRNA synthetase family. Type 1 subfamily. In terms of assembly, homodimer.

Its subcellular location is the cytoplasm. It catalyses the reaction tRNA(Asx) + L-aspartate + ATP = L-aspartyl-tRNA(Asx) + AMP + diphosphate. Its function is as follows. Aspartyl-tRNA synthetase with relaxed tRNA specificity since it is able to aspartylate not only its cognate tRNA(Asp) but also tRNA(Asn). Reaction proceeds in two steps: L-aspartate is first activated by ATP to form Asp-AMP and then transferred to the acceptor end of tRNA(Asp/Asn). The chain is Aspartate--tRNA(Asp/Asn) ligase from Rhizobium leguminosarum bv. trifolii (strain WSM2304).